The sequence spans 391 residues: MENTTNRNTAGVLTSSNGNFATNSVAASTPKRSKSARRKTFKCTGYDGCTMSFTRAEHLARHIRKHTGEKPFQCPACLKFFSRVDNLKQHRESVHAHKNHHSTSSHQRKPSSSSLSSSSSASSSSSASSSTSYSDPYRKTNINSGNMPMMAENEKAPQIIHSSPEFITSTRSIPPISPRSIYNTQRQQQHQQQQHQQAPYYFPSHPITDSYYQYPLPSNNNTINYLPSVDVQYPLNVSPSSTSHPASEVIISSFPPRSMPSTSFKYKDSADFQARTTMNKYNIRPSNINVNTSNINNHLDSFSPPFSPSTTVAEAKPIILPQYQQAFSQPPNGNKNNNMSSSKNGGKGGENFKNTDDRNDNNNKKRSETLSESDISVNTNKKRLSVDYILT.

Positions 1 to 27 are enriched in polar residues; sequence MENTTNRNTAGVLTSSNGNFATNSVAA. Positions 1–37 are disordered; sequence MENTTNRNTAGVLTSSNGNFATNSVAASTPKRSKSAR. C2H2-type zinc fingers lie at residues 41–66 and 72–95; these read FKCT…IRKH and FQCP…ESVH. Residues 91-149 are disordered; it reads RESVHAHKNHHSTSSHQRKPSSSSLSSSSSASSSSSASSSTSYSDPYRKTNINSGNMPM. The span at 96 to 109 shows a compositional bias: basic residues; sequence AHKNHHSTSSHQRK. The segment covering 110-134 has biased composition (low complexity); that stretch reads PSSSSLSSSSSASSSSSASSSTSYS. Serine 162 and serine 163 each carry phosphoserine. Positions 326–374 are disordered; it reads AFSQPPNGNKNNNMSSSKNGGKGGENFKNTDDRNDNNNKKRSETLSESD. Residues 332–344 show a composition bias toward low complexity; that stretch reads NGNKNNNMSSSKN. The span at 353–369 shows a compositional bias: basic and acidic residues; it reads KNTDDRNDNNNKKRSET.

The protein resides in the nucleus. Transcription factor that participates in the transcriptional activation of glucose-repressed genes during exponential growth in non-fermentable carbon conditions. Also involved in salt-stress response. This is Nutrient and stress factor 1 (USV1) from Saccharomyces cerevisiae (strain ATCC 204508 / S288c) (Baker's yeast).